The following is a 487-amino-acid chain: L-tartrate/succinate antiporter (487 aa).

14 helical membrane-spanning segments follow: residues 10-30 (YLAPLAVIAIIALIPVPAGLE), 33-53 (TWLYFAVFTGVIVGLILEPVP), 54-74 (GAVVAMVGISIIAILSPWLLF), 93-113 (WAVSGFSNSVIWLIFAAFMFG), 137-157 (TLFLGYAVMFSELILAPVTPS), 189-209 (IGSYIMWMGIVADCVTSAIFL), 236-256 (FLGMLPLSILLVLLVPWLAYV), 292-312 (LMVGALVLWIFGGDYIDAAMV), 313-333 (GYSVVALMLLLRIISWDDIVS), 340-360 (VFFWLASLITLATGLNNTGFI), 370-390 (SLSGYSPTIVMVALIVVFYLL), 393-413 (FFASATAYTSALAPMMIAAAL), 418-438 (IPLPVFCLMVGAAIGLGSILT), and 465-485 (IFGLIFLVLLVITGLLWMPVV).

It belongs to the SLC13A/DASS transporter (TC 2.A.47) family. DIT1 subfamily.

The protein resides in the cell inner membrane. It carries out the reaction (2R,3R)-tartrate(out) + succinate(in) = (2R,3R)-tartrate(in) + succinate(out). Functionally, catalyzes the uptake of tartrate in exchange for intracellular succinate. Essential for anaerobic L-tartrate fermentation. This chain is L-tartrate/succinate antiporter (ttdT), found in Escherichia coli O6:K15:H31 (strain 536 / UPEC).